A 348-amino-acid chain; its full sequence is Dihydroorotase (348 aa).

Residues H14 and H16 each coordinate Zn(2+). Substrate-binding positions include 16–18 (HLR) and N42. Residues K100, H137, and H175 each contribute to the Zn(2+) site. K100 is modified (N6-carboxylysine). Residue H137 participates in substrate binding. L220 provides a ligand contact to substrate. D248 is a binding site for Zn(2+). Residue D248 is part of the active site. Residues H252 and A264 each contribute to the substrate site.

The protein belongs to the metallo-dependent hydrolases superfamily. DHOase family. Class II DHOase subfamily. In terms of assembly, homodimer. Zn(2+) serves as cofactor.

The catalysed reaction is (S)-dihydroorotate + H2O = N-carbamoyl-L-aspartate + H(+). The protein operates within pyrimidine metabolism; UMP biosynthesis via de novo pathway; (S)-dihydroorotate from bicarbonate: step 3/3. Catalyzes the reversible cyclization of carbamoyl aspartate to dihydroorotate. The sequence is that of Dihydroorotase from Azotobacter vinelandii (strain DJ / ATCC BAA-1303).